The primary structure comprises 150 residues: D-aminoacyl-tRNA deacylase (150 aa).

Residues 138–139 (GP) carry the Gly-cisPro motif, important for rejection of L-amino acids motif.

It belongs to the DTD family. In terms of assembly, homodimer.

It localises to the cytoplasm. The enzyme catalyses glycyl-tRNA(Ala) + H2O = tRNA(Ala) + glycine + H(+). It catalyses the reaction a D-aminoacyl-tRNA + H2O = a tRNA + a D-alpha-amino acid + H(+). Functionally, an aminoacyl-tRNA editing enzyme that deacylates mischarged D-aminoacyl-tRNAs. Also deacylates mischarged glycyl-tRNA(Ala), protecting cells against glycine mischarging by AlaRS. Acts via tRNA-based rather than protein-based catalysis; rejects L-amino acids rather than detecting D-amino acids in the active site. By recycling D-aminoacyl-tRNA to D-amino acids and free tRNA molecules, this enzyme counteracts the toxicity associated with the formation of D-aminoacyl-tRNA entities in vivo and helps enforce protein L-homochirality. The chain is D-aminoacyl-tRNA deacylase from Opitutus terrae (strain DSM 11246 / JCM 15787 / PB90-1).